The following is an 874-amino-acid chain: Alanine--tRNA ligase (874 aa).

Zn(2+) contacts are provided by His562, His566, Cys665, and His669.

The protein belongs to the class-II aminoacyl-tRNA synthetase family. It depends on Zn(2+) as a cofactor.

The protein localises to the cytoplasm. It catalyses the reaction tRNA(Ala) + L-alanine + ATP = L-alanyl-tRNA(Ala) + AMP + diphosphate. Functionally, catalyzes the attachment of alanine to tRNA(Ala) in a two-step reaction: alanine is first activated by ATP to form Ala-AMP and then transferred to the acceptor end of tRNA(Ala). Also edits incorrectly charged Ser-tRNA(Ala) and Gly-tRNA(Ala) via its editing domain. In Pseudomonas putida (strain ATCC 700007 / DSM 6899 / JCM 31910 / BCRC 17059 / LMG 24140 / F1), this protein is Alanine--tRNA ligase.